The chain runs to 326 residues: N-acetyl-gamma-glutamyl-phosphate reductase (326 aa).

Cysteine 155 is a catalytic residue.

It belongs to the NAGSA dehydrogenase family. Type 1 subfamily.

Its subcellular location is the cytoplasm. It catalyses the reaction N-acetyl-L-glutamate 5-semialdehyde + phosphate + NADP(+) = N-acetyl-L-glutamyl 5-phosphate + NADPH + H(+). Its pathway is amino-acid biosynthesis; L-arginine biosynthesis; N(2)-acetyl-L-ornithine from L-glutamate: step 3/4. In terms of biological role, catalyzes the NADPH-dependent reduction of N-acetyl-5-glutamyl phosphate to yield N-acetyl-L-glutamate 5-semialdehyde. This chain is N-acetyl-gamma-glutamyl-phosphate reductase, found in Shewanella woodyi (strain ATCC 51908 / MS32).